We begin with the raw amino-acid sequence, 95 residues long: Aspartyl/glutamyl-tRNA(Asn/Gln) amidotransferase subunit C (95 aa).

Belongs to the GatC family. As to quaternary structure, heterotrimer of A, B and C subunits.

It catalyses the reaction L-glutamyl-tRNA(Gln) + L-glutamine + ATP + H2O = L-glutaminyl-tRNA(Gln) + L-glutamate + ADP + phosphate + H(+). The enzyme catalyses L-aspartyl-tRNA(Asn) + L-glutamine + ATP + H2O = L-asparaginyl-tRNA(Asn) + L-glutamate + ADP + phosphate + 2 H(+). Functionally, allows the formation of correctly charged Asn-tRNA(Asn) or Gln-tRNA(Gln) through the transamidation of misacylated Asp-tRNA(Asn) or Glu-tRNA(Gln) in organisms which lack either or both of asparaginyl-tRNA or glutaminyl-tRNA synthetases. The reaction takes place in the presence of glutamine and ATP through an activated phospho-Asp-tRNA(Asn) or phospho-Glu-tRNA(Gln). The polypeptide is Aspartyl/glutamyl-tRNA(Asn/Gln) amidotransferase subunit C (Laribacter hongkongensis (strain HLHK9)).